The following is a 191-amino-acid chain: GDP-mannose pyrophosphatase (191 aa).

GDP-alpha-D-mannose is bound by residues Tyr17, 38-40 (KRE), Arg67, and 85-87 (AGL). The 138-residue stretch at 43–180 (DRGNGATILL…EIRDGKTVLL (138 aa)) folds into the Nudix hydrolase domain. Ala85, Glu100, and Glu104 together coordinate Mg(2+). The short motif at 86–106 (GLLDNDEPEVCIRKEAIEETG) is the Nudix box element. Residues Glu104, Glu127, 150-151 (DE), and Lys176 each bind GDP-alpha-D-mannose. Glu151 contacts Mg(2+).

The protein belongs to the Nudix hydrolase family. NudK subfamily. Homodimer. Requires Mg(2+) as cofactor.

The enzyme catalyses GDP-alpha-D-mannose + H2O = alpha-D-mannose 1-phosphate + GMP + 2 H(+). Nucleoside diphosphate sugar hydrolase that hydrolyzes GDP-mannose as its preferred substrate, yielding GMP and mannose-1-phosphate. In Shigella boydii serotype 4 (strain Sb227), this protein is GDP-mannose pyrophosphatase (nudK).